The chain runs to 236 residues: Phosphoserine phosphatase (236 aa).

Asp30 serves as the catalytic Nucleophile. Positions 30 and 32 each coordinate Mg(2+). The active-site Proton donor is Asp32. Residues Glu39, Arg76, 120–121, and Lys169 each bind substrate; that span reads SG. Asp192 provides a ligand contact to Mg(2+). Asn195 serves as a coordination point for substrate.

The protein belongs to the HAD-like hydrolase superfamily. SerB family. Mg(2+) is required as a cofactor.

The catalysed reaction is O-phospho-L-serine + H2O = L-serine + phosphate. It catalyses the reaction O-phospho-D-serine + H2O = D-serine + phosphate. Its pathway is amino-acid biosynthesis; L-serine biosynthesis; L-serine from 3-phospho-D-glycerate: step 3/3. This is Phosphoserine phosphatase from Polaromonas sp. (strain JS666 / ATCC BAA-500).